Here is a 683-residue protein sequence, read N- to C-terminus: DNA-directed RNA polymerase subunit beta' (683 aa).

Residues Cys-69, Cys-71, Cys-87, and Cys-90 each contribute to the Zn(2+) site. Asp-489, Asp-491, and Asp-493 together coordinate Mg(2+).

The protein belongs to the RNA polymerase beta' chain family. RpoC1 subfamily. As to quaternary structure, in plastids the minimal PEP RNA polymerase catalytic core is composed of four subunits: alpha, beta, beta', and beta''. When a (nuclear-encoded) sigma factor is associated with the core the holoenzyme is formed, which can initiate transcription. Mg(2+) serves as cofactor. It depends on Zn(2+) as a cofactor.

The protein localises to the plastid. Its subcellular location is the chloroplast. The enzyme catalyses RNA(n) + a ribonucleoside 5'-triphosphate = RNA(n+1) + diphosphate. Functionally, DNA-dependent RNA polymerase catalyzes the transcription of DNA into RNA using the four ribonucleoside triphosphates as substrates. The protein is DNA-directed RNA polymerase subunit beta' of Triticum aestivum (Wheat).